The following is a 1396-amino-acid chain: DNA-directed RNA polymerase subunit beta (1396 aa).

Belongs to the RNA polymerase beta chain family. In terms of assembly, the RNAP catalytic core consists of 2 alpha, 1 beta, 1 beta' and 1 omega subunit. When a sigma factor is associated with the core the holoenzyme is formed, which can initiate transcription.

The catalysed reaction is RNA(n) + a ribonucleoside 5'-triphosphate = RNA(n+1) + diphosphate. Functionally, DNA-dependent RNA polymerase catalyzes the transcription of DNA into RNA using the four ribonucleoside triphosphates as substrates. The polypeptide is DNA-directed RNA polymerase subunit beta (Erythrobacter litoralis (strain HTCC2594)).